Here is a 414-residue protein sequence, read N- to C-terminus: Isocitrate dehydrogenase [NADP] cytoplasmic (414 aa).

Position 2 is an N-acetylserine (S2). Y42 carries the phosphotyrosine modification. Residue 75 to 77 coordinates NADP(+); that stretch reads TIT. Position 77 (T77) interacts with substrate. At K81 the chain carries N6-acetyllysine. R82 contributes to the NADP(+) binding site. Residues 94–100 and R109 each bind substrate; that span reads SPNGTIR. K126 carries the post-translational modification N6-succinyllysine. The substrate site is built by R132 and K212. An N6-acetyllysine mark is found at K224 and K233. Position 252 (D252) interacts with Mn(2+). K260 contributes to the NADP(+) binding site. D275 and D279 together coordinate Mn(2+). 310–315 contributes to the NADP(+) binding site; the sequence is GTVTRH. The residue at position 321 (K321) is an N6-acetyllysine. N328 contributes to the NADP(+) binding site. Residue S389 is modified to Phosphoserine. K400 bears the N6-succinyllysine mark.

Belongs to the isocitrate and isopropylmalate dehydrogenases family. As to quaternary structure, homodimer. The cofactor is Mg(2+). It depends on Mn(2+) as a cofactor. Acetylation at Lys-374 dramatically reduces catalytic activity.

It localises to the cytoplasm. The protein resides in the cytosol. The enzyme catalyses D-threo-isocitrate + NADP(+) = 2-oxoglutarate + CO2 + NADPH. Its function is as follows. Catalyzes the NADP(+)-dependent oxidative decarboxylation of isocitrate (D-threo-isocitrate) to 2-ketoglutarate (2-oxoglutarate), which is required by other enzymes such as the phytanoyl-CoA dioxygenase. Plays a critical role in the generation of NADPH, an important cofactor in many biosynthesis pathways. May act as a corneal epithelial crystallin and may be involved in maintaining corneal epithelial transparency. The sequence is that of Isocitrate dehydrogenase [NADP] cytoplasmic (IDH1) from Ovis aries (Sheep).